The primary structure comprises 90 residues: PqqA binding protein 2 (90 aa).

It belongs to the PqqD family. Monomer. Interacts with PqqE.

It participates in cofactor biosynthesis; pyrroloquinoline quinone biosynthesis. In terms of biological role, functions as a PqqA binding protein and presents PqqA to PqqE, in the pyrroloquinoline quinone (PQQ) biosynthetic pathway. The chain is PqqA binding protein 2 (pqqD2) from Pseudomonas putida (strain ATCC 47054 / DSM 6125 / CFBP 8728 / NCIMB 11950 / KT2440).